Consider the following 75-residue polypeptide: Large ribosomal subunit protein bL31 (75 aa).

Belongs to the bacterial ribosomal protein bL31 family. Type A subfamily. In terms of assembly, part of the 50S ribosomal subunit.

Its function is as follows. Binds the 23S rRNA. In Zymomonas mobilis subsp. mobilis (strain ATCC 31821 / ZM4 / CP4), this protein is Large ribosomal subunit protein bL31.